The following is a 358-amino-acid chain: DnaJ homolog subfamily C member 18 (358 aa).

One can recognise a J domain in the interval Asn82–Gly146. A helical transmembrane segment spans residues Ala228–Leu248.

It is found in the endoplasmic reticulum membrane. The chain is DnaJ homolog subfamily C member 18 (DNAJC18) from Bos taurus (Bovine).